A 597-amino-acid chain; its full sequence is Bile salt-activated lipase (597 aa).

A signal peptide spans 1–18 (LGASRLGPSPGCLAVASA). Cysteines 82 and 98 form a disulfide. Asparagine 205 carries N-linked (GlcNAc...) asparagine glycosylation. Catalysis depends on serine 212, which acts as the Acyl-ester intermediate. The cysteines at positions 264 and 275 are disulfide-linked. Aspartate 338 serves as the catalytic Charge relay system. N-linked (GlcNAc...) asparagine glycosylation occurs at asparagine 379. Histidine 453 functions as the Charge relay system in the catalytic mechanism. Residues 553–591 (AGASLLPPEDNSQASPVPPADNSGAPTEPSAGDSEVAQM) form a disordered region.

This sequence belongs to the type-B carboxylesterase/lipase family. Interacts with CLC.

The protein resides in the secreted. It catalyses the reaction a triacylglycerol + H2O = a diacylglycerol + a fatty acid + H(+). The catalysed reaction is 1,2,3-tri-(9Z-octadecenoyl)-glycerol + H2O = di-(9Z)-octadecenoylglycerol + (9Z)-octadecenoate + H(+). It carries out the reaction 1,2,3-trioctanoylglycerol + H2O = dioctanoylglycerol + octanoate + H(+). The enzyme catalyses a sterol ester + H2O = a sterol + a fatty acid + H(+). It catalyses the reaction cholesteryl (9Z-octadecenoate) + H2O = cholesterol + (9Z)-octadecenoate + H(+). The catalysed reaction is an acetyl ester + H2O = an aliphatic alcohol + acetate + H(+). It carries out the reaction a butanoate ester + H2O = an aliphatic alcohol + butanoate + H(+). The enzyme catalyses 9-hexadecanoyloxy-octadecanoate + H2O = 9-hydroxy-octadecanoate + hexadecanoate + H(+). It catalyses the reaction 9-(9Z-octadecenoyloxy)-octadecanoate + H2O = 9-hydroxy-octadecanoate + (9Z)-octadecenoate + H(+). The catalysed reaction is 1-hexadecanoyl-sn-glycero-3-phosphocholine + H2O = sn-glycerol 3-phosphocholine + hexadecanoate + H(+). It carries out the reaction 12-hexadecanoyloxy-octadecanoate + H2O = 12-hydroxyoctadecanoate + hexadecanoate + H(+). The enzyme catalyses 12-(9Z-octadecenoyloxy)-octadecanoate + H2O = 12-hydroxyoctadecanoate + (9Z)-octadecenoate + H(+). It catalyses the reaction 13-(9Z-octadecenoyloxy)-octadecanoate + H2O = 13-hydroxy-octadecanoate + (9Z)-octadecenoate + H(+). The catalysed reaction is 9-(9Z-hexadecenoyloxy)-octadecanoate + H2O = (9Z)-hexadecenoate + 9-hydroxy-octadecanoate + H(+). It carries out the reaction 12-(9Z-hexadecenoyloxy)-octadecanoate + H2O = 12-hydroxyoctadecanoate + (9Z)-hexadecenoate + H(+). The enzyme catalyses 13-(9Z-hexadecenoyloxy)-octadecanoate + H2O = 13-hydroxy-octadecanoate + (9Z)-hexadecenoate + H(+). It catalyses the reaction 12-octadecanoyloxy-octadecanoate + H2O = 12-hydroxyoctadecanoate + octadecanoate + H(+). The catalysed reaction is 13-octadecanoyloxy-octadecanoate + H2O = 13-hydroxy-octadecanoate + octadecanoate + H(+). It carries out the reaction 5-(9Z-hexadecenoyloxy)-octadecanoate + H2O = 5-hydroxy-octadecanoate + (9Z)-hexadecenoate + H(+). The enzyme catalyses 9-octadecanoyloxy-octadecanoate + H2O = 9-hydroxy-octadecanoate + octadecanoate + H(+). With respect to regulation, activated by bile salts such as sodium taurocholate. Its function is as follows. Catalyzes the hydrolysis of a wide range of substrates including cholesteryl esters, phospholipids, lysophospholipids, di- and tri-acylglycerols, and fatty acid esters of hydroxy fatty acids (FAHFA). Preferentially hydrolyzes FAHFAs with the ester bond further away from the carboxylate. Unsaturated FAHFAs are hydrolyzed more quickly than saturated FAHFAs. Has an essential role in the complete digestion of dietary lipids and their intestinal absorption, along with the absorption of fat-soluble vitamins. This is Bile salt-activated lipase (CEL) from Bos taurus (Bovine).